We begin with the raw amino-acid sequence, 91 residues long: Class I hydrophobin E (91 aa).

The first 16 residues, 1–16 (MKFSIAAIALAAVAVA), serve as a signal peptide directing secretion. Intrachain disulfides connect C30–C72, C42–C64, C43–C55, and C73–C89. N83 carries N-linked (GlcNAc...) asparagine glycosylation.

Belongs to the fungal hydrophobin family.

The protein resides in the secreted. Its subcellular location is the cell wall. The protein localises to the vacuole. It localises to the cytoplasmic vesicle. In terms of biological role, aerial growth, conidiation, and dispersal of filamentous fungi in the environment rely upon a capability of their secreting small amphipathic proteins called hydrophobins (HPBs) with low sequence identity. Class I can self-assemble into an outermost layer of rodlet bundles on aerial cell surfaces, conferring cellular hydrophobicity that supports fungal growth, development and dispersal; whereas Class II form highly ordered films at water-air interfaces through intermolecular interactions but contribute nothing to the rodlet structure. Hyd1E contributes to certain cell wall-related features, such as hydrophobicity but is not involved in cell wall-related events during fungal proliferation in host hemocoel. Does not contribute to conidial hydrophobicity. This Beauveria bassiana (strain ARSEF 2860) (White muscardine disease fungus) protein is Class I hydrophobin E.